We begin with the raw amino-acid sequence, 275 residues long: MHLLRTLLLRSNTSNISLLTKCSFRASPLHKWPISLRSGSQISLLPTEQKKWLHSQPKQQDTATKTPVHDLPSGIQHQSEETSPSARSSISTDPSSIAEEDPLQDQSIGLLKRFKKTFRQHGKVLIPVHLVTSSIWFGSFYYAAMQGVNVVPFLEYIGLPDGIVNILKNSQGGNALTAYAMYKIATPARYTVTLGGTSVSVKYLRKYGYLSTPPLVKDYFQDRMEETKELFTEKMEETRDIISGKMEETKDRISEKLQETKDRVAFRKKKNEDME.

Residues 51–100 (KWLHSQPKQQDTATKTPVHDLPSGIQHQSEETSPSARSSISTDPSSIAEE) are disordered. Polar residues-rich tracts occupy residues 56–65 (QPKQQDTATK) and 75–95 (IQHQSEETSPSARSSISTDPS). Residues 105–217 (DQSIGLLKRF…GYLSTPPLVK (113 aa)) enclose the DUF1279 domain. A helical transmembrane segment spans residues 124–144 (VLIPVHLVTSSIWFGSFYYAA). Residues 221-275 (QDRMEETKELFTEKMEETRDIISGKMEETKDRISEKLQETKDRVAFRKKKNEDME) adopt a coiled-coil conformation.

This sequence belongs to the FAM210 family.

The protein localises to the membrane. The protein resides in the mitochondrion. It localises to the cytoplasm. Its function is as follows. May play a role in the structure and strength of both muscle and bone. The polypeptide is Protein FAM210A (fam210a) (Xenopus laevis (African clawed frog)).